Here is a 380-residue protein sequence, read N- to C-terminus: Cytochrome b (380 aa).

4 helical membrane passes run 33–53, 77–98, 113–133, and 178–198; these read FGSL…FLAM, WLIR…FLHV, WNMG…GYVL, and FFAF…VHLL. 2 residues coordinate heme b: histidine 83 and histidine 97. 2 residues coordinate heme b: histidine 182 and histidine 196. Residue histidine 201 participates in a ubiquinone binding. Transmembrane regions (helical) follow at residues 226-246, 288-308, 320-340, and 347-367; these read IKDF…VLFF, LGGV…PLLH, ITQT…WIGG, and FIMI…IFMP.

Belongs to the cytochrome b family. The cytochrome bc1 complex contains 11 subunits: 3 respiratory subunits (MT-CYB, CYC1 and UQCRFS1), 2 core proteins (UQCRC1 and UQCRC2) and 6 low-molecular weight proteins (UQCRH/QCR6, UQCRB/QCR7, UQCRQ/QCR8, UQCR10/QCR9, UQCR11/QCR10 and a cleavage product of UQCRFS1). This cytochrome bc1 complex then forms a dimer. Heme b is required as a cofactor.

The protein localises to the mitochondrion inner membrane. Component of the ubiquinol-cytochrome c reductase complex (complex III or cytochrome b-c1 complex) that is part of the mitochondrial respiratory chain. The b-c1 complex mediates electron transfer from ubiquinol to cytochrome c. Contributes to the generation of a proton gradient across the mitochondrial membrane that is then used for ATP synthesis. The sequence is that of Cytochrome b (MT-CYB) from Chionomys roberti (Robert's snow vole).